We begin with the raw amino-acid sequence, 256 residues long: Fibroblast growth factor 3 (256 aa).

A signal peptide spans 1-18 (MVIILLLLLLSFLDPSLE). Disordered regions lie at residues 31 to 54 (APCARGQACDPRQRRDAGGRGGVY), 151 to 176 (RHHATTQPPPTGSGIGGSKRRASSKR), and 219 to 256 (LRESQRHHTGSHRAPVGRAERRRRRHRGSKGHNRRADI). The segment covering 238–256 (ERRRRRHRGSKGHNRRADI) has biased composition (basic residues).

Belongs to the heparin-binding growth factors family.

Its subcellular location is the secreted. Its function is as follows. Plays an important role in the regulation of embryonic development, cell proliferation, and cell differentiation. The protein is Fibroblast growth factor 3 (fgf3) of Danio rerio (Zebrafish).